We begin with the raw amino-acid sequence, 484 residues long: Chromosomal replication initiator protein DnaA (484 aa).

Positions 1-73 (MQEGKNIWSL…EILTEKGHNT (73 aa)) are domain I, interacts with DnaA modulators. The tract at residues 73–140 (TINVEFINPP…EDIHTKYRNP (68 aa)) is domain II. Positions 141 to 357 (FLKKKYTFEN…AAVTKLKAHI (217 aa)) are domain III, AAA+ region. ATP contacts are provided by glycine 185, glycine 187, lysine 188, and threonine 189. The domain IV, binds dsDNA stretch occupies residues 358–484 (DLEDIEIDTS…IELMNKINKN (127 aa)).

This sequence belongs to the DnaA family. In terms of assembly, oligomerizes as a right-handed, spiral filament on DNA at oriC.

It localises to the cytoplasm. Functionally, plays an essential role in the initiation and regulation of chromosomal replication. ATP-DnaA binds to the origin of replication (oriC) to initiate formation of the DNA replication initiation complex once per cell cycle. Binds the DnaA box (a 9 base pair repeat at the origin) and separates the double-stranded (ds)DNA. Forms a right-handed helical filament on oriC DNA; dsDNA binds to the exterior of the filament while single-stranded (ss)DNA is stabiized in the filament's interior. The ATP-DnaA-oriC complex binds and stabilizes one strand of the AT-rich DNA unwinding element (DUE), permitting loading of DNA polymerase. After initiation quickly degrades to an ADP-DnaA complex that is not apt for DNA replication. Binds acidic phospholipids. The protein is Chromosomal replication initiator protein DnaA of Borrelia turicatae (strain 91E135).